A 353-amino-acid chain; its full sequence is Photosystem II D2 protein (353 aa).

Thr2 bears the N-acetylthreonine mark. A Phosphothreonine modification is found at Thr2. A helical transmembrane segment spans residues 41-61 (CAYFALGGWFTGTTFVTSWYT). His118 is a chlorophyll a binding site. Residues 125 to 141 (GFMLRQFELARSVQLRP) traverse the membrane as a helical segment. Positions 130 and 143 each coordinate pheophytin a. The chain crosses the membrane as a helical span at residues 153–166 (VFVSVFLIYPLGQS). His198 is a binding site for chlorophyll a. A helical membrane pass occupies residues 208-228 (AALLCAIHGATVENTLFEDGD). Residues His215 and Phe262 each contribute to the a plastoquinone site. Fe cation is bound at residue His215. Position 269 (His269) interacts with Fe cation. A helical membrane pass occupies residues 279–295 (GLWMSALGVVGLALNLR).

The protein belongs to the reaction center PufL/M/PsbA/D family. PSII is composed of 1 copy each of membrane proteins PsbA, PsbB, PsbC, PsbD, PsbE, PsbF, PsbH, PsbI, PsbJ, PsbK, PsbL, PsbM, PsbT, PsbX, PsbY, PsbZ, Psb30/Ycf12, at least 3 peripheral proteins of the oxygen-evolving complex and a large number of cofactors. It forms dimeric complexes. It depends on The D1/D2 heterodimer binds P680, chlorophylls that are the primary electron donor of PSII, and subsequent electron acceptors. It shares a non-heme iron and each subunit binds pheophytin, quinone, additional chlorophylls, carotenoids and lipids. There is also a Cl(-1) ion associated with D1 and D2, which is required for oxygen evolution. The PSII complex binds additional chlorophylls, carotenoids and specific lipids. as a cofactor.

The protein resides in the plastid. Its subcellular location is the chloroplast thylakoid membrane. It catalyses the reaction 2 a plastoquinone + 4 hnu + 2 H2O = 2 a plastoquinol + O2. In terms of biological role, photosystem II (PSII) is a light-driven water:plastoquinone oxidoreductase that uses light energy to abstract electrons from H(2)O, generating O(2) and a proton gradient subsequently used for ATP formation. It consists of a core antenna complex that captures photons, and an electron transfer chain that converts photonic excitation into a charge separation. The D1/D2 (PsbA/PsbD) reaction center heterodimer binds P680, the primary electron donor of PSII as well as several subsequent electron acceptors. D2 is needed for assembly of a stable PSII complex. This is Photosystem II D2 protein from Aethionema grandiflorum (Persian stone-cress).